The sequence spans 613 residues: UvrABC system protein C (613 aa).

A GIY-YIG domain is found at 12-89 (DHPGVYIMHD…IKQHRPRYNV (78 aa)). Positions 199-234 (TALVKELKEQMEAAAARLEFEKAARLRDQLRAVQEV) constitute a UVR domain.

Belongs to the UvrC family. As to quaternary structure, interacts with UvrB in an incision complex.

The protein resides in the cytoplasm. The UvrABC repair system catalyzes the recognition and processing of DNA lesions. UvrC both incises the 5' and 3' sides of the lesion. The N-terminal half is responsible for the 3' incision and the C-terminal half is responsible for the 5' incision. The chain is UvrABC system protein C from Moorella thermoacetica (strain ATCC 39073 / JCM 9320).